The sequence spans 76 residues: Exodeoxyribonuclease 7 small subunit (76 aa).

The protein belongs to the XseB family. In terms of assembly, heterooligomer composed of large and small subunits.

The protein localises to the cytoplasm. The catalysed reaction is Exonucleolytic cleavage in either 5'- to 3'- or 3'- to 5'-direction to yield nucleoside 5'-phosphates.. Functionally, bidirectionally degrades single-stranded DNA into large acid-insoluble oligonucleotides, which are then degraded further into small acid-soluble oligonucleotides. This chain is Exodeoxyribonuclease 7 small subunit, found in Methylococcus capsulatus (strain ATCC 33009 / NCIMB 11132 / Bath).